The chain runs to 666 residues: Polyamine deacetylase HDAC10 (666 aa).

The histone deacetylase stretch occupies residues 1–323; it reads MGTALVYHED…VCMMVQTLLG (323 aa). His-135 is a catalytic residue.

This sequence belongs to the histone deacetylase family. HD type 2 subfamily. In terms of assembly, interacts with HDAC3. Interacts with HDAC2 and NCOR2/SMRT. Interacts with HSPA8/HSC70. Interacts with MSH2. Widely expressed.

Its subcellular location is the cytoplasm. The protein localises to the nucleus. It catalyses the reaction N(8)-acetylspermidine + H2O = spermidine + acetate. The catalysed reaction is N-acetylputrescine + H2O = putrescine + acetate. It carries out the reaction N-acetylcadaverine + H2O = cadaverine + acetate. The enzyme catalyses N(6)-acetyl-L-lysyl-[protein] + H2O = L-lysyl-[protein] + acetate. Polyamine deacetylase (PDAC), which acts preferentially on N(8)-acetylspermidine, and also on acetylcadaverine and acetylputrescine. Exhibits attenuated catalytic activity toward N(1),N(8)-diacetylspermidine and very low activity, if any, toward N(1)-acetylspermidine. Histone deacetylase activity has been observed in vitro. Has also been shown to be involved in MSH2 deacetylation. The physiological relevance of protein/histone deacetylase activity is unclear and could be very weak. May play a role in the promotion of late stages of autophagy, possibly autophagosome-lysosome fusion and/or lysosomal exocytosis in neuroblastoma cells. May play a role in homologous recombination. May promote DNA mismatch repair. The chain is Polyamine deacetylase HDAC10 (Hdac10) from Mus musculus (Mouse).